The primary structure comprises 67 residues: Probable Sec-independent protein translocase protein TatE (67 aa).

The helical transmembrane segment at 1-21 threads the bilayer; the sequence is MEGISIAKLLIIGALIVLLFG. The disordered stretch occupies residues 44–67; it reads KDEDTSAARTTAEETPAERVSHKD.

This sequence belongs to the TatA/E family. TatE subfamily.

It localises to the cell inner membrane. Its function is as follows. Part of the twin-arginine translocation (Tat) system that transports large folded proteins containing a characteristic twin-arginine motif in their signal peptide across membranes. TatE shares overlapping functions with TatA. This chain is Probable Sec-independent protein translocase protein TatE, found in Pantoea ananatis (strain LMG 20103).